An 830-amino-acid polypeptide reads, in one-letter code: V-type proton ATPase 116 kDa subunit a 3 (830 aa).

At 1 to 385 (MGSMFRSEEV…DAYGVGRYQE (385 aa)) the chain is on the cytoplasmic side. The segment at 139-158 (QLAAAHTDGASERTPLLQAP) is disordered. Residues 386–404 (VNPAPYTIITFPFLFAVMF) traverse the membrane as a helical segment. The Vacuolar segment spans residues 405–406 (GD). The helical transmembrane segment at 407–423 (VGHGLLMFLFALAMVLA) threads the bilayer. Residues 424-438 (ENRPAVKAAQNEIWQ) are Cytoplasmic-facing. Residues 439–468 (TFFRGRYLLLLMGLFSIYTGFIYNECFSRA) form a helical membrane-spanning segment. At 469–532 (TSIFPSGWSV…AANHLSFLNS (64 aa)) the chain is on the vacuolar side. A helical membrane pass occupies residues 533-552 (FKMKMSVILGVVHMAFGVVL). The Cytoplasmic portion of the chain corresponds to 553–570 (GVFNHVHFGQRHRLLLET). The chain crosses the membrane as a helical span at residues 571–591 (LPELTFLLGLFGYLVFLVIYK). At 592–635 (WLCVWAARAASAPSILIHFINMFLFSHSPSNRLLYPRQEVVQAT) the chain is on the vacuolar side. The helical transmembrane segment at 636–655 (LVVLALAMVPILLLGTPLHL) threads the bilayer. The Cytoplasmic segment spans residues 656–720 (LHRHRRRLRR…EVLMHQAIHT (65 aa)). The tract at residues 681–701 (LPDASVNGWSSDEEKAGGLDD) is disordered. A helical transmembrane segment spans residues 721 to 745 (IEFCLGCVSNTASYLRLWALSLAHA). The Vacuolar segment spans residues 746–766 (QLSEVLWAMVMRIGLGLGREV). Residues 767–807 (GVAAVVLVPIFAAFAVMTVAILLVMEGLSAFLHALRLHWVE) traverse the membrane as a helical segment. Topologically, residues 808–830 (FQNKFYSGTGYKLSPFTFAATDD) are cytoplasmic.

Belongs to the V-ATPase 116 kDa subunit family. V-ATPase is a heteromultimeric enzyme made up of two complexes: the ATP-hydrolytic V1 complex and the proton translocation V0 complex. The V1 complex consists of three catalytic AB heterodimers that form a heterohexamer, three peripheral stalks each consisting of EG heterodimers, one central rotor including subunits D and F, and the regulatory subunits C and H. The proton translocation complex V0 consists of the proton transport subunit a, a ring of proteolipid subunits c9c'', rotary subunit d, subunits e and f, and the accessory subunits ATP6AP1/Ac45 and ATP6AP2/PRR. Isoform long is highly expressed in osteoclastomas. Isoform short is highly expressed in thymus.

The protein localises to the membrane. Functionally, subunit of the V0 complex of vacuolar(H+)-ATPase (V-ATPase), a multisubunit enzyme composed of a peripheral complex (V1) that hydrolyzes ATP and a membrane integral complex (V0) that translocates protons. V-ATPase is responsible for acidifying and maintaining the pH of intracellular compartments and in some cell types, is targeted to the plasma membrane, where it is responsible for acidifying the extracellular environment. Seems to be directly involved in T-cell activation. The chain is V-type proton ATPase 116 kDa subunit a 3 (TCIRG1) from Homo sapiens (Human).